The chain runs to 360 residues: Hydroxycarboxylic acid receptor 2 (360 aa).

The Extracellular portion of the chain corresponds to 1-30 (MSKQNHFLVINGKNCCVFRDENIAKVLPPV). Residues 31–51 (LGLEFVFGLLGNGLALWIFCF) traverse the membrane as a helical segment. Over 52-60 (HLKSWKSSR) the chain is Cytoplasmic. A helical membrane pass occupies residues 61–81 (IFLFNLAVADFLLIICLPFLT). The Extracellular segment spans residues 82–98 (DNYVQNWDWRFGSIPCR). Cys97 and Cys174 are joined by a disulfide. The helical transmembrane segment at 99–119 (VMLFMLAMNRQGSIIFLTVVA) threads the bilayer. Residues 120 to 140 (VDRYFRVVHPHHFLNKISNRT) lie on the Cytoplasmic side of the membrane. The chain crosses the membrane as a helical span at residues 141-161 (AAIISCFLWGITIGLTVHLLY). The Extracellular segment spans residues 162–189 (TDMMTRNGDANLCSSFSICYTFRWHDAM). Residues 190 to 210 (FLLEFFLPLGIILFCSGRIIW) traverse the membrane as a helical segment. Topologically, residues 211-226 (SLRQRQMDRHVKIKRA) are cytoplasmic. The chain crosses the membrane as a helical span at residues 227-247 (INFIMVVAIVFVICFLPSVAV). The Extracellular segment spans residues 248–270 (RIRIFWLLYKHNVRNCDIYSSVD). A helical transmembrane segment spans residues 271–291 (LAFFTTLSFTYMNSMLDPVVY). Topologically, residues 292-360 (YFSSPSFPNF…SPPYLASTSR (69 aa)) are cytoplasmic. Positions 320 to 360 (NNRSTSVELTGDPSTIRSIPGALMTDPSEPGSPPYLASTSR) are disordered. The span at 321–336 (NRSTSVELTGDPSTIR) shows a compositional bias: polar residues. Ser325 carries the phosphoserine modification.

It belongs to the G-protein coupled receptor 1 family. Expressed in adipose tissue, lung and spleen.

The protein localises to the cell membrane. Functionally, acts as a high affinity receptor for both nicotinic acid (also known as niacin) and (D)-beta-hydroxybutyrate and mediates increased adiponectin secretion and decreased lipolysis through G(i)-protein-mediated inhibition of adenylyl cyclase. This pharmacological effect requires nicotinic acid doses that are much higher than those provided by a normal diet. Mediates nicotinic acid-induced apoptosis in mature neutrophils. Receptor activation by nicotinic acid results in reduced cAMP levels which may affect activity of cAMP-dependent protein kinase A and phosphorylation of target proteins, leading to neutrophil apoptosis. The rank order of potency for the displacement of nicotinic acid binding is 5-methyl pyrazole-3-carboxylic acid = pyridine-3-acetic acid &gt; acifran &gt; 5-methyl nicotinic acid = acipimox &gt;&gt; nicotinuric acid = nicotinamide. The polypeptide is Hydroxycarboxylic acid receptor 2 (Hcar2) (Rattus norvegicus (Rat)).